The chain runs to 126 residues: uncharacterized protein (126 aa).

A disordered region spans residues 1 to 27 (MSKSKTPNFDDMEVLDDTNDEYDDSES). Acidic residues predominate over residues 10–27 (DDMEVLDDTNDEYDDSES).

This is an uncharacterized protein from Halorubrum sp. PV6 (HRPV-1).